We begin with the raw amino-acid sequence, 256 residues long: 1-(5-phosphoribosyl)-5-[(5-phosphoribosylamino)methylideneamino] imidazole-4-carboxamide isomerase (256 aa).

Asp8 (proton acceptor) is an active-site residue. Asp130 (proton donor) is an active-site residue.

This sequence belongs to the HisA/HisF family.

The protein localises to the cytoplasm. The enzyme catalyses 1-(5-phospho-beta-D-ribosyl)-5-[(5-phospho-beta-D-ribosylamino)methylideneamino]imidazole-4-carboxamide = 5-[(5-phospho-1-deoxy-D-ribulos-1-ylimino)methylamino]-1-(5-phospho-beta-D-ribosyl)imidazole-4-carboxamide. Its pathway is amino-acid biosynthesis; L-histidine biosynthesis; L-histidine from 5-phospho-alpha-D-ribose 1-diphosphate: step 4/9. The sequence is that of 1-(5-phosphoribosyl)-5-[(5-phosphoribosylamino)methylideneamino] imidazole-4-carboxamide isomerase from Chlorobium luteolum (strain DSM 273 / BCRC 81028 / 2530) (Pelodictyon luteolum).